Consider the following 90-residue polypeptide: Small ribosomal subunit protein bS16 (90 aa).

It belongs to the bacterial ribosomal protein bS16 family.

The chain is Small ribosomal subunit protein bS16 from Bacillus cytotoxicus (strain DSM 22905 / CIP 110041 / 391-98 / NVH 391-98).